The chain runs to 619 residues: Chaperone protein HscA homolog (619 aa).

Belongs to the heat shock protein 70 family.

In terms of biological role, chaperone involved in the maturation of iron-sulfur cluster-containing proteins. Has a low intrinsic ATPase activity which is markedly stimulated by HscB. The protein is Chaperone protein HscA homolog of Shewanella denitrificans (strain OS217 / ATCC BAA-1090 / DSM 15013).